The chain runs to 287 residues: Large ribosomal subunit protein uL2 (287 aa).

Positions 222-266 are disordered; sequence RGIRPTVRGSAMNPNDHPHGGGEGRSPVGRDAPRTPWGKRHMGVK.

Belongs to the universal ribosomal protein uL2 family. Part of the 50S ribosomal subunit. Forms a bridge to the 30S subunit in the 70S ribosome.

In terms of biological role, one of the primary rRNA binding proteins. Required for association of the 30S and 50S subunits to form the 70S ribosome, for tRNA binding and peptide bond formation. It has been suggested to have peptidyltransferase activity; this is somewhat controversial. Makes several contacts with the 16S rRNA in the 70S ribosome. This is Large ribosomal subunit protein uL2 from Mycoplasma pneumoniae (strain ATCC 29342 / M129 / Subtype 1) (Mycoplasmoides pneumoniae).